We begin with the raw amino-acid sequence, 496 residues long: Glutamyl-tRNA(Gln) amidotransferase subunit A (496 aa).

Active-site charge relay system residues include K75 and S150. S174 (acyl-ester intermediate) is an active-site residue.

The protein belongs to the amidase family. GatA subfamily. Heterotrimer of A, B and C subunits.

It catalyses the reaction L-glutamyl-tRNA(Gln) + L-glutamine + ATP + H2O = L-glutaminyl-tRNA(Gln) + L-glutamate + ADP + phosphate + H(+). Its function is as follows. Allows the formation of correctly charged Gln-tRNA(Gln) through the transamidation of misacylated Glu-tRNA(Gln) in organisms which lack glutaminyl-tRNA synthetase. The reaction takes place in the presence of glutamine and ATP through an activated gamma-phospho-Glu-tRNA(Gln). The polypeptide is Glutamyl-tRNA(Gln) amidotransferase subunit A (Burkholderia lata (strain ATCC 17760 / DSM 23089 / LMG 22485 / NCIMB 9086 / R18194 / 383)).